A 342-amino-acid chain; its full sequence is Dihydroorotase (342 aa).

2 residues coordinate Zn(2+): His13 and His15. Substrate is bound by residues 15–17 (HLR) and Asn41. Residues Lys98, His135, and His173 each contribute to the Zn(2+) site. Residue Lys98 is modified to N6-carboxylysine. His135 contributes to the substrate binding site. Leu218 serves as a coordination point for substrate. A Zn(2+)-binding site is contributed by Asp246. Asp246 is a catalytic residue. Residues His250 and Ala262 each coordinate substrate.

This sequence belongs to the metallo-dependent hydrolases superfamily. DHOase family. Class II DHOase subfamily. As to quaternary structure, homodimer. Zn(2+) serves as cofactor.

The enzyme catalyses (S)-dihydroorotate + H2O = N-carbamoyl-L-aspartate + H(+). It participates in pyrimidine metabolism; UMP biosynthesis via de novo pathway; (S)-dihydroorotate from bicarbonate: step 3/3. Its function is as follows. Catalyzes the reversible cyclization of carbamoyl aspartate to dihydroorotate. This Vibrio vulnificus (strain YJ016) protein is Dihydroorotase.